Here is a 285-residue protein sequence, read N- to C-terminus: Eukaryotic translation initiation factor 3 subunit F-2 (285 aa).

An MPN domain is found at Val11 to Gly145.

This sequence belongs to the eIF-3 subunit F family. In terms of assembly, component of the eukaryotic translation initiation factor 3 (eIF-3) complex. The eIF-3 complex interacts with pix.

It localises to the cytoplasm. In terms of biological role, component of the eukaryotic translation initiation factor 3 (eIF-3) complex, which is involved in protein synthesis of a specialized repertoire of mRNAs and, together with other initiation factors, stimulates binding of mRNA and methionyl-tRNAi to the 40S ribosome. The eIF-3 complex specifically targets and initiates translation of a subset of mRNAs involved in cell proliferation. The chain is Eukaryotic translation initiation factor 3 subunit F-2 from Drosophila melanogaster (Fruit fly).